A 343-amino-acid chain; its full sequence is tRNA N6-adenosine threonylcarbamoyltransferase (343 aa).

His111 and His115 together coordinate Fe cation. Substrate contacts are provided by residues 135–139 (VLSGG), Asp168, Gly181, and Asn280. Residue Asp306 participates in Fe cation binding.

Belongs to the KAE1 / TsaD family. The cofactor is Fe(2+).

It localises to the cytoplasm. It carries out the reaction L-threonylcarbamoyladenylate + adenosine(37) in tRNA = N(6)-L-threonylcarbamoyladenosine(37) in tRNA + AMP + H(+). Required for the formation of a threonylcarbamoyl group on adenosine at position 37 (t(6)A37) in tRNAs that read codons beginning with adenine. Is involved in the transfer of the threonylcarbamoyl moiety of threonylcarbamoyl-AMP (TC-AMP) to the N6 group of A37, together with TsaE and TsaB. TsaD likely plays a direct catalytic role in this reaction. This chain is tRNA N6-adenosine threonylcarbamoyltransferase, found in Protochlamydia amoebophila (strain UWE25).